Reading from the N-terminus, the 139-residue chain is Small ribosomal subunit protein uS11A (139 aa).

A disordered region spans residues 119-139 (DVTPIPTDSTRRKGGRRGRRL). The span at 130–139 (RKGGRRGRRL) shows a compositional bias: basic residues.

It belongs to the universal ribosomal protein uS11 family. As to quaternary structure, component of the small ribosomal subunit (SSU). Mature yeast ribosomes consist of a small (40S) and a large (60S) subunit. The 40S small subunit contains 1 molecule of ribosomal RNA (18S rRNA) and at least 33 different proteins. The large 60S subunit contains 3 rRNA molecules (25S, 5.8S and 5S rRNA) and at least 46 different proteins. uS11 interacts with eS1 forming part of the mRNA exit tunnel. uS11 interacts with snoRNA U3. uS11 interacts with MPP10. Component of the ribosomal small subunit (SSU) processome composed of at least 40 protein subunits and snoRNA U3.

It is found in the cytoplasm. The protein resides in the nucleus. It localises to the nucleolus. Its function is as follows. Component of the ribosome, a large ribonucleoprotein complex responsible for the synthesis of proteins in the cell. The small ribosomal subunit (SSU) binds messenger RNAs (mRNAs) and translates the encoded message by selecting cognate aminoacyl-transfer RNA (tRNA) molecules. The large subunit (LSU) contains the ribosomal catalytic site termed the peptidyl transferase center (PTC), which catalyzes the formation of peptide bonds, thereby polymerizing the amino acids delivered by tRNAs into a polypeptide chain. The nascent polypeptides leave the ribosome through a tunnel in the LSU and interact with protein factors that function in enzymatic processing, targeting, and the membrane insertion of nascent chains at the exit of the ribosomal tunnel. uS11 is involved in nucleolar processing of pre-18S ribosomal RNA and ribosome assembly. This chain is Small ribosomal subunit protein uS11A (rps1401), found in Schizosaccharomyces pombe (strain 972 / ATCC 24843) (Fission yeast).